A 318-amino-acid chain; its full sequence is Aspartate carbamoyltransferase catalytic subunit (318 aa).

Residues Arg59 and Thr60 each contribute to the carbamoyl phosphate site. Lys87 lines the L-aspartate pocket. Arg109, His137, and Gln140 together coordinate carbamoyl phosphate. Residues Arg170 and Arg224 each coordinate L-aspartate. The carbamoyl phosphate site is built by Gly265 and Pro266.

Belongs to the aspartate/ornithine carbamoyltransferase superfamily. ATCase family. Heterododecamer (2C3:3R2) of six catalytic PyrB chains organized as two trimers (C3), and six regulatory PyrI chains organized as three dimers (R2).

It carries out the reaction carbamoyl phosphate + L-aspartate = N-carbamoyl-L-aspartate + phosphate + H(+). The protein operates within pyrimidine metabolism; UMP biosynthesis via de novo pathway; (S)-dihydroorotate from bicarbonate: step 2/3. Its function is as follows. Catalyzes the condensation of carbamoyl phosphate and aspartate to form carbamoyl aspartate and inorganic phosphate, the committed step in the de novo pyrimidine nucleotide biosynthesis pathway. This chain is Aspartate carbamoyltransferase catalytic subunit, found in Rhizobium rhizogenes (strain K84 / ATCC BAA-868) (Agrobacterium radiobacter).